A 921-amino-acid chain; its full sequence is Alanine--tRNA ligase (921 aa).

The Zn(2+) site is built by His602, His606, Cys706, and His710.

It belongs to the class-II aminoacyl-tRNA synthetase family. The cofactor is Zn(2+).

Its subcellular location is the cytoplasm. The enzyme catalyses tRNA(Ala) + L-alanine + ATP = L-alanyl-tRNA(Ala) + AMP + diphosphate. Its function is as follows. Catalyzes the attachment of alanine to tRNA(Ala) in a two-step reaction: alanine is first activated by ATP to form Ala-AMP and then transferred to the acceptor end of tRNA(Ala). Also edits incorrectly charged Ser-tRNA(Ala) and Gly-tRNA(Ala) via its editing domain. The protein is Alanine--tRNA ligase of Hyperthermus butylicus (strain DSM 5456 / JCM 9403 / PLM1-5).